Here is a 76-residue protein sequence, read N- to C-terminus: MAYRESFYRYLMTQRDADSSDEVAQFANNAQHDLTFPKQEQDYEELSDYLELNASYLPSMSVFDRAYKMYEEKMMY.

This sequence belongs to the UPF0346 family.

The protein is UPF0346 protein LBA0976 of Lactobacillus acidophilus (strain ATCC 700396 / NCK56 / N2 / NCFM).